Consider the following 373-residue polypeptide: RNA 3'-terminal phosphate cyclase-like protein (373 aa).

This sequence belongs to the RNA 3'-terminal cyclase family. Type 2 subfamily. As to quaternary structure, part of the small subunit (SSU) processome, composed of more than 70 proteins and the RNA chaperone small nucleolar RNA (snoRNA) U3. Interacts with BMS1.

The protein localises to the nucleus. It is found in the nucleolus. Functionally, as part of the small subunit (SSU) processome, it plays a role in 40S-ribosomal-subunit biogenesis in the early pre-rRNA processing steps at sites A0, A1 and A2 that are required for proper maturation of the 18S RNA. Activates BMS1 by promoting GDP/GTP exchange. Does not have cyclase activity. The polypeptide is RNA 3'-terminal phosphate cyclase-like protein (Homo sapiens (Human)).